A 292-amino-acid polypeptide reads, in one-letter code: Bis(5'-nucleosyl)-tetraphosphatase, symmetrical (292 aa).

The protein belongs to the Ap4A hydrolase family.

It catalyses the reaction P(1),P(4)-bis(5'-adenosyl) tetraphosphate + H2O = 2 ADP + 2 H(+). Hydrolyzes diadenosine 5',5'''-P1,P4-tetraphosphate to yield ADP. The polypeptide is Bis(5'-nucleosyl)-tetraphosphatase, symmetrical (Yersinia enterocolitica serotype O:8 / biotype 1B (strain NCTC 13174 / 8081)).